The primary structure comprises 79 residues: Acyl carrier protein (79 aa).

The Carrier domain occupies 2 to 77 (SDIEARVKKI…LAIDYAKSHA (76 aa)). At Ser-37 the chain carries O-(pantetheine 4'-phosphoryl)serine.

It belongs to the acyl carrier protein (ACP) family. Post-translationally, 4'-phosphopantetheine is transferred from CoA to a specific serine of apo-ACP by AcpS. This modification is essential for activity because fatty acids are bound in thioester linkage to the sulfhydryl of the prosthetic group.

The protein resides in the cytoplasm. It functions in the pathway lipid metabolism; fatty acid biosynthesis. Functionally, carrier of the growing fatty acid chain in fatty acid biosynthesis. The sequence is that of Acyl carrier protein from Methylibium petroleiphilum (strain ATCC BAA-1232 / LMG 22953 / PM1).